Consider the following 100-residue polypeptide: DNA-directed RNA polymerase subunit Rpo11 (100 aa).

It belongs to the archaeal Rpo11/eukaryotic RPB11/RPC19 RNA polymerase subunit family. As to quaternary structure, part of the RNA polymerase complex.

It localises to the cytoplasm. It catalyses the reaction RNA(n) + a ribonucleoside 5'-triphosphate = RNA(n+1) + diphosphate. DNA-dependent RNA polymerase (RNAP) catalyzes the transcription of DNA into RNA using the four ribonucleoside triphosphates as substrates. The polypeptide is DNA-directed RNA polymerase subunit Rpo11 (Picrophilus torridus (strain ATCC 700027 / DSM 9790 / JCM 10055 / NBRC 100828 / KAW 2/3)).